The following is a 555-amino-acid chain: Glucose-6-phosphate isomerase (555 aa).

The active-site Proton donor is Glu-365. Residues His-396 and Lys-522 contribute to the active site.

The protein belongs to the GPI family.

The protein resides in the cytoplasm. It carries out the reaction alpha-D-glucose 6-phosphate = beta-D-fructose 6-phosphate. The protein operates within carbohydrate biosynthesis; gluconeogenesis. It participates in carbohydrate degradation; glycolysis; D-glyceraldehyde 3-phosphate and glycerone phosphate from D-glucose: step 2/4. In terms of biological role, catalyzes the reversible isomerization of glucose-6-phosphate to fructose-6-phosphate. In Psychrobacter cryohalolentis (strain ATCC BAA-1226 / DSM 17306 / VKM B-2378 / K5), this protein is Glucose-6-phosphate isomerase.